Reading from the N-terminus, the 483-residue chain is Glycogen synthase (483 aa).

Residue Lys-18 participates in ADP-alpha-D-glucose binding.

The protein belongs to the glycosyltransferase 1 family. Bacterial/plant glycogen synthase subfamily.

It catalyses the reaction [(1-&gt;4)-alpha-D-glucosyl](n) + ADP-alpha-D-glucose = [(1-&gt;4)-alpha-D-glucosyl](n+1) + ADP + H(+). The protein operates within glycan biosynthesis; glycogen biosynthesis. Synthesizes alpha-1,4-glucan chains using ADP-glucose. The chain is Glycogen synthase from Rhodopseudomonas palustris (strain ATCC BAA-98 / CGA009).